Reading from the N-terminus, the 327-residue chain is Annexin A8 (327 aa).

Annexin repeat units follow at residues 21-92 (FNPD…ALMY), 93-164 (PPYR…CLLQ), 177-249 (GLAL…TVVK), and 253-324 (NLHG…NLVG). Residues Met-266, Gly-268, Gly-270, and Asp-310 each contribute to the Ca(2+) site.

The protein belongs to the annexin family.

Its function is as follows. This protein is an anticoagulant protein that acts as an indirect inhibitor of the thromboplastin-specific complex, which is involved in the blood coagulation cascade. The polypeptide is Annexin A8 (ANXA8) (Bos taurus (Bovine)).